The sequence spans 175 residues: NADH-ubiquinone oxidoreductase chain 6 (175 aa).

Transmembrane regions (helical) follow at residues 1-21, 25-45, 47-67, 88-108, and 149-169; these read MMLY…VGFS, SPIY…GIVL, FGGS…MMVV, AVLG…YYVL, and YGTW…VVIM.

It belongs to the complex I subunit 6 family. In terms of assembly, core subunit of respiratory chain NADH dehydrogenase (Complex I) which is composed of 45 different subunits.

It is found in the mitochondrion inner membrane. The catalysed reaction is a ubiquinone + NADH + 5 H(+)(in) = a ubiquinol + NAD(+) + 4 H(+)(out). Its function is as follows. Core subunit of the mitochondrial membrane respiratory chain NADH dehydrogenase (Complex I) which catalyzes electron transfer from NADH through the respiratory chain, using ubiquinone as an electron acceptor. Essential for the catalytic activity and assembly of complex I. In Bos indicus (Zebu), this protein is NADH-ubiquinone oxidoreductase chain 6 (MT-ND6).